A 189-amino-acid polypeptide reads, in one-letter code: Dirigent protein 21 (189 aa).

A signal peptide spans 1 to 19 (MASLYLLLLLPLFLALILA). 2 N-linked (GlcNAc...) asparagine glycosylation sites follow: asparagine 72 and asparagine 173.

The protein belongs to the plant dirigent protein family. Homodimer.

Its subcellular location is the secreted. In terms of biological role, dirigent proteins impart stereoselectivity on the phenoxy radical-coupling reaction, yielding optically active lignans from two molecules of coniferyl alcohol in the biosynthesis of lignans, flavonolignans, and alkaloids and thus plays a central role in plant secondary metabolism. The protein is Dirigent protein 21 (DIR21) of Arabidopsis thaliana (Mouse-ear cress).